The primary structure comprises 194 residues: MRLSDTHIKEYLNDGRIVIEPAPTDEMISGVTADLRLGNKFRTFHAHTAAYVDLSGPKDQLNKAMESIMSDEIVLDEGEAFFLHPGELALAITYEKVTLPADIVGWLDGRSSLARLGLMVHVTAHRIDPGWSGNIVLEFYNSGKLPLALRPMMKIGAMSFETLTGPCANPYNTRKDAKYKDQNSAVASRISDDR.

DCTP-binding positions include 110 to 115 (RSSLAR), aspartate 128, 136 to 138 (VLE), tyrosine 171, lysine 178, and glutamine 182. Glutamate 138 functions as the Proton donor/acceptor in the catalytic mechanism.

Belongs to the dCTP deaminase family. As to quaternary structure, homotrimer.

The enzyme catalyses dCTP + H2O + H(+) = dUTP + NH4(+). Its pathway is pyrimidine metabolism; dUMP biosynthesis; dUMP from dCTP (dUTP route): step 1/2. Functionally, catalyzes the deamination of dCTP to dUTP. The chain is dCTP deaminase from Pseudoalteromonas translucida (strain TAC 125).